The following is a 523-amino-acid chain: Peptide chain release factor 3 (523 aa).

The tr-type G domain occupies Asn10 to Gly277. GTP-binding positions include Ser19–Thr26, Asp87–His91, and Asn141–Asp144.

Belongs to the TRAFAC class translation factor GTPase superfamily. Classic translation factor GTPase family. PrfC subfamily.

The protein localises to the cytoplasm. In terms of biological role, increases the formation of ribosomal termination complexes and stimulates activities of RF-1 and RF-2. It binds guanine nucleotides and has strong preference for UGA stop codons. It may interact directly with the ribosome. The stimulation of RF-1 and RF-2 is significantly reduced by GTP and GDP, but not by GMP. This is Peptide chain release factor 3 from Lactobacillus delbrueckii subsp. bulgaricus (strain ATCC BAA-365 / Lb-18).